The chain runs to 235 residues: Ribonuclease HII (235 aa).

Residues 23-212 enclose the RNase H type-2 domain; the sequence is GLVAGVDEAG…VAHVVSIARM (190 aa). 3 residues coordinate a divalent metal cation: Asp29, Glu30, and Asp121.

This sequence belongs to the RNase HII family. The cofactor is Mn(2+). Requires Mg(2+) as cofactor.

It localises to the cytoplasm. It carries out the reaction Endonucleolytic cleavage to 5'-phosphomonoester.. Endonuclease that specifically degrades the RNA of RNA-DNA hybrids. The sequence is that of Ribonuclease HII from Delftia acidovorans (strain DSM 14801 / SPH-1).